The primary structure comprises 687 residues: Ferric vibriobactin receptor ViuA (687 aa).

The N-terminal stretch at 1–37 (MAVLCPARVSVAENKKFKLHTLSAMMMGLFTGSFAYA) is a signal peptide. In terms of domain architecture, TBDR plug spans 62–184 (SIYETSASVE…SAGAIVMKSN (123 aa)). The TBDR beta-barrel domain maps to 189 to 687 (HFESAVKAGI…MIGASVQLNF (499 aa)).

The protein belongs to the TonB-dependent receptor family.

It is found in the cell outer membrane. Functionally, involved in the uptake of iron in complex with vibriobactin, a catecholate siderophore synthesized by V.cholerae. Binds and transports ferric vibriobactin across the outer membrane. The energy source is provided by the inner membrane TonB system. The sequence is that of Ferric vibriobactin receptor ViuA from Vibrio cholerae serotype O1 (strain ATCC 39541 / Classical Ogawa 395 / O395).